The chain runs to 507 residues: Tyrosine protein-kinase src-2 (507 aa).

Residues 1-10 (MGSCIGKEDP) show a composition bias toward basic and acidic residues. Residues 1 to 52 (MGSCIGKEDPPPGATSPVHTSSTLGRESLPSHPRIPSIGPIAASSSGNTIDK) form a disordered region. A lipid anchor (N-myristoyl glycine) is attached at glycine 2. Positions 35-47 (IPSIGPIAASSSG) are enriched in low complexity. The 62-residue stretch at 57-118 (SQSANFVALF…PSNYVAREKS (62 aa)) folds into the SH3 domain. The SH2 domain occupies 124 to 216 (WYFGKMRRID…GLCVNLGAPC (93 aa)). The Protein kinase domain maps to 240–494 (VRLIRQIGAG…LQWKLEDLFN (255 aa)). Residues 246–254 (IGAGQFGEV) and lysine 268 contribute to the ATP site. Aspartate 358 functions as the Proton acceptor in the catalytic mechanism. Tyrosine 500 carries the post-translational modification Phosphotyrosine.

It belongs to the protein kinase superfamily. Tyr protein kinase family. SRC subfamily. It depends on Mg(2+) as a cofactor. The cofactor is Mn(2+). May be phosphorylated on Tyr-500 by csk-1. Expressed in vulva, cells around anus and pharyngeal muscles.

The catalysed reaction is L-tyrosyl-[protein] + ATP = O-phospho-L-tyrosyl-[protein] + ADP + H(+). With respect to regulation, may be inhibited by csk-1-mediated phosphorylation at Tyr-500. Functionally, non-receptor tyrosine-protein kinase which may play a role in larval and pharynx development. Unlike src-1, does not play a role in embryonic development. In Caenorhabditis elegans, this protein is Tyrosine protein-kinase src-2.